The primary structure comprises 132 residues: mRNA interferase toxin YafO (132 aa).

As to quaternary structure, probably forms a complex with the antitoxin YafN which inhibits the mRNA interferase activity.

Functionally, toxic component of a type II toxin-antitoxin (TA) system. A translation-dependent mRNA interferase. Overexpression causes cessation of cell growth and inhibits cell proliferation via inhibition of translation; this blockage is overcome by subsequent expression of antitoxin YafN. Overexpression causes cleavage of a number of mRNAs in a ribosome-dependent fashion. YafO binding to the 50S ribosomal subunit in the translation complex induces mRNA cleavage 3' to the region protected by the ribosome; YafO alone is not able to digest mRNA. The polypeptide is mRNA interferase toxin YafO (yafO) (Escherichia coli (strain K12)).